The sequence spans 303 residues: Phosphate import ATP-binding protein PstB (303 aa).

Residues 56–298 (LSTSDVHVYY…PDHQLTEAYI (243 aa)) form the ABC transporter domain. 88 to 95 (GPSGCGKS) is an ATP binding site.

It belongs to the ABC transporter superfamily. Phosphate importer (TC 3.A.1.7) family. In terms of assembly, the complex is composed of two ATP-binding proteins (PstB), two transmembrane proteins (PstC and PstA) and a solute-binding protein (PstS).

Its subcellular location is the cell inner membrane. The catalysed reaction is phosphate(out) + ATP + H2O = ADP + 2 phosphate(in) + H(+). In terms of biological role, part of the ABC transporter complex PstSACB involved in phosphate import. Responsible for energy coupling to the transport system. This chain is Phosphate import ATP-binding protein PstB, found in Acinetobacter baylyi (strain ATCC 33305 / BD413 / ADP1).